A 129-amino-acid chain; its full sequence is MSILKEFREFAVKGNVVDMAVGVIIGGAFGKIVSSLVSDVVMPPIGWLIGGVDFKDLAIEIAPAKEGAEAVMLKYGAFIQNVFLLGVIAIAADGMGTLINKIKKPAEAAPAEPTAEEKLLTEIRDLLKK.

2 consecutive transmembrane segments (helical) span residues 10-30 and 70-90; these read FAVKGNVVDMAVGVIIGGAFG and AVMLKYGAFIQNVFLLGVIAI.

The protein belongs to the MscL family. In terms of assembly, homopentamer.

It is found in the cell inner membrane. Its function is as follows. Channel that opens in response to stretch forces in the membrane lipid bilayer. May participate in the regulation of osmotic pressure changes within the cell. The sequence is that of Large-conductance mechanosensitive channel from Actinobacillus pleuropneumoniae serotype 3 (strain JL03).